The chain runs to 363 residues: Double-strand-specific pac1 ribonuclease (363 aa).

Disordered regions lie at residues 1-35 (MGRF…KRSS) and 92-138 (SRHD…PPLR). The segment covering 13–22 (DSSSSASDSL) has biased composition (low complexity). The span at 24-35 (RGRRSLGHKRSS) shows a compositional bias: basic residues. S122 is modified (phosphoserine). The RNase III domain maps to 139–262 (SEKLKEQVFM…YLGALILDGQ (124 aa)). The DRBM domain occupies 285-356 (RPIDKLAKSK…AMQALEVLAK (72 aa)).

The cofactor is Mg(2+).

The catalysed reaction is Endonucleolytic cleavage to 5'-phosphomonoester.. In terms of biological role, digests double-stranded RNA. Converts long double-stranded RNAs into short oligonucleotides, leaving 5'-phosphates on their cleavage products. Probably inhibits mating and meiosis by degrading a specific mRNA required for sexual development. In Schizosaccharomyces pombe (strain 972 / ATCC 24843) (Fission yeast), this protein is Double-strand-specific pac1 ribonuclease (pac1).